The primary structure comprises 1058 residues: Carbamoyl phosphate synthase large chain (1058 aa).

Positions 1–401 (MPKRTDIQKI…SLLKACRSLE (401 aa)) are carboxyphosphate synthetic domain. ATP is bound by residues Arg129, Arg169, Gly175, Gly176, Arg208, Ile210, Glu215, Gly241, Ile242, His243, Gln284, and Glu298. The ATP-grasp 1 domain occupies 133–327 (KQLMEELEQP…IAKLAAKIAV (195 aa)). Gln284, Glu298, and Asn300 together coordinate Mg(2+). 3 residues coordinate Mn(2+): Gln284, Glu298, and Asn300. The interval 402–546 (IGVHHNEIPE…YSTYGWENES (145 aa)) is oligomerization domain. The tract at residues 547–929 (IKSDKESVLV…ALYKAFEASY (383 aa)) is carbamoyl phosphate synthetic domain. The ATP-grasp 2 domain occupies 671–861 (EQALKELDIP…MAQVATKLIL (191 aa)). Arg707, Ser746, Ile748, Glu752, Gly777, Val778, His779, Ser780, Gln820, and Glu832 together coordinate ATP. Residues Gln820, Glu832, and Asn834 each coordinate Mg(2+). Gln820, Glu832, and Asn834 together coordinate Mn(2+). The MGS-like domain maps to 930 to 1058 (LHLPTFGNVV…ESRSFVTEAI (129 aa)). The allosteric domain stretch occupies residues 930 to 1058 (LHLPTFGNVV…ESRSFVTEAI (129 aa)).

This sequence belongs to the CarB family. As to quaternary structure, composed of two chains; the small (or glutamine) chain promotes the hydrolysis of glutamine to ammonia, which is used by the large (or ammonia) chain to synthesize carbamoyl phosphate. Tetramer of heterodimers (alpha,beta)4. Mg(2+) serves as cofactor. The cofactor is Mn(2+).

The catalysed reaction is hydrogencarbonate + L-glutamine + 2 ATP + H2O = carbamoyl phosphate + L-glutamate + 2 ADP + phosphate + 2 H(+). The enzyme catalyses hydrogencarbonate + NH4(+) + 2 ATP = carbamoyl phosphate + 2 ADP + phosphate + 2 H(+). The protein operates within amino-acid biosynthesis; L-arginine biosynthesis; carbamoyl phosphate from bicarbonate: step 1/1. Its pathway is pyrimidine metabolism; UMP biosynthesis via de novo pathway; (S)-dihydroorotate from bicarbonate: step 1/3. Functionally, large subunit of the glutamine-dependent carbamoyl phosphate synthetase (CPSase). CPSase catalyzes the formation of carbamoyl phosphate from the ammonia moiety of glutamine, carbonate, and phosphate donated by ATP, constituting the first step of 2 biosynthetic pathways, one leading to arginine and/or urea and the other to pyrimidine nucleotides. The large subunit (synthetase) binds the substrates ammonia (free or transferred from glutamine from the small subunit), hydrogencarbonate and ATP and carries out an ATP-coupled ligase reaction, activating hydrogencarbonate by forming carboxy phosphate which reacts with ammonia to form carbamoyl phosphate. The chain is Carbamoyl phosphate synthase large chain from Streptococcus pneumoniae (strain ATCC 700669 / Spain 23F-1).